A 137-amino-acid polypeptide reads, in one-letter code: Altered inheritance of mitochondria protein 11 (137 aa).

The next 2 helical transmembrane spans lie at Leu20–Thr42 and Leu69–Leu91.

This sequence belongs to the AIM11 family.

Its subcellular location is the membrane. The chain is Altered inheritance of mitochondria protein 11 (AIM11) from Candida glabrata (strain ATCC 2001 / BCRC 20586 / JCM 3761 / NBRC 0622 / NRRL Y-65 / CBS 138) (Yeast).